We begin with the raw amino-acid sequence, 353 residues long: Inositol 3-kinase (353 aa).

Residues serine 197, 247-250 (GAGD), and asparagine 274 each bind ATP. Catalysis depends on aspartate 250, which acts as the Proton acceptor.

This sequence belongs to the carbohydrate kinase pfkB family.

It carries out the reaction myo-inositol + ATP = 1D-myo-inositol 3-phosphate + ADP + H(+). Kinase that phosphorylates myo-inositol to produce multiple myo-inositol monophosphates. Participates in phytic acid biosynthesis in developing seeds. Phytic acid is the primary storage form of phosphorus in cereal grains and other plant seeds. The chain is Inositol 3-kinase from Arabidopsis thaliana (Mouse-ear cress).